Consider the following 368-residue polypeptide: Alanine racemase (368 aa).

Lys40 serves as the catalytic Proton acceptor; specific for D-alanine. At Lys40 the chain carries N6-(pyridoxal phosphate)lysine. Position 134 (Arg134) interacts with substrate. Catalysis depends on Tyr263, which acts as the Proton acceptor; specific for L-alanine. Position 310 (Met310) interacts with substrate.

This sequence belongs to the alanine racemase family. Pyridoxal 5'-phosphate serves as cofactor.

It carries out the reaction L-alanine = D-alanine. It participates in amino-acid biosynthesis; D-alanine biosynthesis; D-alanine from L-alanine: step 1/1. In terms of biological role, catalyzes the interconversion of L-alanine and D-alanine. May also act on other amino acids. The sequence is that of Alanine racemase (alr) from Listeria monocytogenes serotype 4b (strain F2365).